A 706-amino-acid polypeptide reads, in one-letter code: MVNFSNKLTKDQIPGWEEYYFNYKMLKGRVNEYTEQTKEGTQYRRRVLKDFSKLLDDEIEKIVLFMIEQQGLIAARLEDLGKRRARLQDIPLLQEITELREDYRSVGLDLVTLLKFVELNANAVRKILKKFDERLGYKFTDYYVRSRSNHPYSQLQQVFRHVGIGAVVGALSRNLSDLEERQGSYLNIYDQHPLAIPKDPIIDLITATADKLTNSTNFLRFLGQHALIAQADSTAGTEDEQHVGEDEYHLMSLVLNLANTFLYMVNTYIVVPTADGYATSLGAAATACGAVIGSMAVAQVFSSVYFSAWSNRSYFRPLLFSSVVLLLGNVMYAMAFDLGSLTILLLGRVLCGMGSARAVNRRYISDCVPPRIRMQASAAFVSASALGMACGPALAGLLQTNFSLYGLTINQITLPGWIMAFGWLVYLIWLWILFQEPDLGPDVKDFYEGSSSSTSTRYMEQEKMEQGFTEHLLPSEQDEEDDNGDEEHNETLSSSTTTLRPASSVASAYTLLTPSVKVQLLIYFMLKYAMEILLAESSVVTGYYFGWDIGTVSVFLAVLGLSVLPVNAIVGTYISNMFEDRQILVASEMALLAGVMLSFKLTVEYTAAQYVCSAVLTFVSAEVVEGVNLSLLSRVMSARLSRGTYNGGLLSTEAGTVARVVADGTITAAGLLAGEGRLLNATLLPALLVCVASIAATLSTYNSLFY.

Residues V2 to R145 form the SPX domain. 6 helical membrane-spanning segments follow: residues M251–V271, L281–F301, L318–L338, S340–V359, A378–L398, and L414–F434. Residues S475–T498 form a disordered region. Positions E476–H488 are enriched in acidic residues. A run of 5 helical transmembrane segments spans residues L520 to V540, V554 to I574, I583 to V603, V611 to L631, and L678 to L698.

It belongs to the major facilitator superfamily.

It localises to the membrane. This chain is SPX domain-containing membrane protein Os09g0521800, found in Oryza sativa subsp. japonica (Rice).